Consider the following 120-residue polypeptide: Large ribosomal subunit protein uL18 (120 aa).

Belongs to the universal ribosomal protein uL18 family. In terms of assembly, part of the 50S ribosomal subunit; part of the 5S rRNA/L5/L18/L25 subcomplex. Contacts the 5S and 23S rRNAs.

This is one of the proteins that bind and probably mediate the attachment of the 5S RNA into the large ribosomal subunit, where it forms part of the central protuberance. This is Large ribosomal subunit protein uL18 from Rhizobium meliloti (strain 1021) (Ensifer meliloti).